Reading from the N-terminus, the 439-residue chain is Chromosomal replication initiator protein DnaA (439 aa).

The segment at 1 to 75 (MESWSRCLER…GIREVVLAIG (75 aa)) is domain I, interacts with DnaA modulators. The segment at 75–101 (GSRPKTTELPVPVDTTGRLSSTVPFNG) is domain II. Positions 102 to 319 (NLDTHYNFDN…GALNTLVARA (218 aa)) are domain III, AAA+ region. Residues G147, G149, K150, and T151 each contribute to the ATP site. Residues 320-439 (NFTGRAVTIE…WDKLMRKFSE (120 aa)) form a domain IV, binds dsDNA region.

The protein belongs to the DnaA family. As to quaternary structure, oligomerizes as a right-handed, spiral filament on DNA at oriC.

It localises to the cytoplasm. Plays an essential role in the initiation and regulation of chromosomal replication. ATP-DnaA binds to the origin of replication (oriC) to initiate formation of the DNA replication initiation complex once per cell cycle. Binds the DnaA box (a 9 base pair repeat at the origin) and separates the double-stranded (ds)DNA. Forms a right-handed helical filament on oriC DNA; dsDNA binds to the exterior of the filament while single-stranded (ss)DNA is stabiized in the filament's interior. The ATP-DnaA-oriC complex binds and stabilizes one strand of the AT-rich DNA unwinding element (DUE), permitting loading of DNA polymerase. After initiation quickly degrades to an ADP-DnaA complex that is not apt for DNA replication. Binds acidic phospholipids. The protein is Chromosomal replication initiator protein DnaA of Xylella fastidiosa (strain 9a5c).